A 170-amino-acid chain; its full sequence is dCTP pyrophosphatase 1 (170 aa).

A disordered region spans residues 1-27 (MSVAGGEIRGDTGGEDTAAPGRFSFSP). Residue Ser-2 is modified to N-acetylserine. Ser-2 carries the phosphoserine modification. At Thr-12 the chain carries Phosphothreonine. Residues His-38 and 47 to 51 (WEQFH) contribute to the substrate site. Mg(2+) contacts are provided by Glu-63 and Glu-66. Substrate is bound at residue Trp-73. Residue Ser-85 is modified to Phosphoserine. The Mg(2+) site is built by Glu-95 and Asp-98. Tyr-102 is a substrate binding site. Residues 147–170 (GAISEDQAVGPADIPCDSTGQTST) form a disordered region.

Homotetramer. It depends on Mg(2+) as a cofactor.

The protein localises to the mitochondrion. Its subcellular location is the nucleus. It is found in the cytoplasm. The protein resides in the cytosol. It catalyses the reaction dCTP + H2O = dCMP + diphosphate + H(+). Its activity is regulated as follows. Inhibited by the reaction end product PPi. Inhibited by dCDP. Inhibited by triptolide. Hydrolyzes deoxynucleoside triphosphates (dNTPs) to the corresponding nucleoside monophosphates. Has a strong preference for dCTP and its analogs including 5-iodo-dCTP and 5-methyl-dCTP for which it may even have a higher efficiency. May protect DNA or RNA against the incorporation of these genotoxic nucleotide analogs through their catabolism. In Homo sapiens (Human), this protein is dCTP pyrophosphatase 1.